The primary structure comprises 403 residues: Arginine biosynthesis bifunctional protein ArgJ (403 aa).

Substrate contacts are provided by Thr149, Lys175, Thr186, Glu272, Asn398, and Thr403. Thr186 (nucleophile) is an active-site residue.

It belongs to the ArgJ family. As to quaternary structure, heterotetramer of two alpha and two beta chains.

It localises to the cytoplasm. It catalyses the reaction N(2)-acetyl-L-ornithine + L-glutamate = N-acetyl-L-glutamate + L-ornithine. The enzyme catalyses L-glutamate + acetyl-CoA = N-acetyl-L-glutamate + CoA + H(+). The protein operates within amino-acid biosynthesis; L-arginine biosynthesis; L-ornithine and N-acetyl-L-glutamate from L-glutamate and N(2)-acetyl-L-ornithine (cyclic): step 1/1. It functions in the pathway amino-acid biosynthesis; L-arginine biosynthesis; N(2)-acetyl-L-ornithine from L-glutamate: step 1/4. Functionally, catalyzes two activities which are involved in the cyclic version of arginine biosynthesis: the synthesis of N-acetylglutamate from glutamate and acetyl-CoA as the acetyl donor, and of ornithine by transacetylation between N(2)-acetylornithine and glutamate. This chain is Arginine biosynthesis bifunctional protein ArgJ, found in Caldanaerobacter subterraneus subsp. tengcongensis (strain DSM 15242 / JCM 11007 / NBRC 100824 / MB4) (Thermoanaerobacter tengcongensis).